The following is a 365-amino-acid chain: Chorismate synthase (365 aa).

An NADP(+)-binding site is contributed by Arg47. FMN-binding positions include 124–126, Gly287, 302–306, and Arg328; these read RAS and KPTAT. A disordered region spans residues 266–290; sequence FIKSDDSSKLRTTSNNSGGIQGGIS.

Belongs to the chorismate synthase family. In terms of assembly, homotetramer. FMNH2 is required as a cofactor.

The catalysed reaction is 5-O-(1-carboxyvinyl)-3-phosphoshikimate = chorismate + phosphate. Its pathway is metabolic intermediate biosynthesis; chorismate biosynthesis; chorismate from D-erythrose 4-phosphate and phosphoenolpyruvate: step 7/7. In terms of biological role, catalyzes the anti-1,4-elimination of the C-3 phosphate and the C-6 proR hydrogen from 5-enolpyruvylshikimate-3-phosphate (EPSP) to yield chorismate, which is the branch point compound that serves as the starting substrate for the three terminal pathways of aromatic amino acid biosynthesis. This reaction introduces a second double bond into the aromatic ring system. The chain is Chorismate synthase from Prochlorococcus marinus (strain MIT 9301).